A 616-amino-acid polypeptide reads, in one-letter code: Protein NRT1/ PTR FAMILY 2.11 (616 aa).

The interval 1–22 (MERKPLELESTDNHQNPSSAVY) is disordered. The next 12 helical transmembrane spans lie at 59 to 79 (FEKL…TAVF), 87 to 107 (ATII…AAFL), 118 to 138 (LSVA…TAAV), 159 to 179 (GGQI…AGGI), 205 to 225 (FFNW…TLVV), 233 to 253 (WTIG…IFFA), 349 to 369 (VKCI…YLTI), 392 to 412 (FVIP…VFIV), 435 to 455 (LQRI…AGFV), 483 to 503 (AMWL…AAIG), 519 to 539 (FAGS…SFLI), and 566 to 586 (LFYF…LVMS).

It belongs to the major facilitator superfamily. Proton-dependent oligopeptide transporter (POT/PTR) (TC 2.A.17) family. As to expression, expressed in roots. Detected in shoots, stems and flowers. Expressed in veins and in the root vasculature with highest expression in lateral branching points.

The protein resides in the cell membrane. In terms of biological role, high-affinity, proton-dependent glucosinolate-specific transporter. Involved in apoplasmic phloem-loading of glucosinolates and in bidirectional long-distance transport of aliphatic but not indole glucosinolates. May be involved in removal of glucosinolates from the xylem in roots. The sequence is that of Protein NRT1/ PTR FAMILY 2.11 (NPF2.11) from Arabidopsis thaliana (Mouse-ear cress).